The sequence spans 534 residues: Serine/threonine-protein kinase 35 (534 aa).

The interval 32-176 (VESHGSLGAQ…AAAARAMDPV (145 aa)) is disordered. Composition is skewed to low complexity over residues 39–65 (GAQASPASAAAAEGSATRRARAATSRA) and 166–176 (PAAAARAMDPV). Positions 202–530 (YSLLAEIGRG…FELETRMDQV (329 aa)) constitute a Protein kinase domain. ATP is bound by residues 208 to 216 (IGRGSYGVV) and K231. D360 acts as the Proton acceptor in catalysis.

Belongs to the protein kinase superfamily. Ser/Thr protein kinase family. As to quaternary structure, interacts with PDLIM1/CLP-36. Post-translationally, autophosphorylated. As to expression, expressed in testis.

The protein resides in the nucleus. The protein localises to the nucleolus. It is found in the cytoplasm. It catalyses the reaction L-seryl-[protein] + ATP = O-phospho-L-seryl-[protein] + ADP + H(+). The enzyme catalyses L-threonyl-[protein] + ATP = O-phospho-L-threonyl-[protein] + ADP + H(+). The protein is Serine/threonine-protein kinase 35 (STK35) of Homo sapiens (Human).